Here is a 129-residue protein sequence, read N- to C-terminus: Large-conductance mechanosensitive channel (129 aa).

Transmembrane regions (helical) follow at residues 10-30 (FAVK…GAFG) and 76-96 (GAFI…FGMV).

This sequence belongs to the MscL family. In terms of assembly, homopentamer.

The protein localises to the cell inner membrane. Its function is as follows. Channel that opens in response to stretch forces in the membrane lipid bilayer. May participate in the regulation of osmotic pressure changes within the cell. This Actinobacillus pleuropneumoniae serotype 5b (strain L20) protein is Large-conductance mechanosensitive channel.